The primary structure comprises 510 residues: Propionyl-CoA carboxylase beta chain (510 aa).

Residues 1 to 257 (MKDILEQLED…NNREKPPVRP (257 aa)) form the CoA carboxyltransferase N-terminal domain. The segment at 1-504 (MKDILEQLED…NKSVQMPWKK (504 aa)) is carboxyltransferase. The 244-residue stretch at 261-504 (DPDRIEPSLD…NKSVQMPWKK (244 aa)) folds into the CoA carboxyltransferase C-terminal domain. Residues 292-325 (DEGDFYEIQEEFAKNIITGFIRLEGRTVGVVANQ) are acyl-CoA binding.

Belongs to the AccD/PCCB family. The holoenzyme is a dodecamer composed of 6 PccA/alpha subunits and 6 PccB/beta subunits.

The enzyme catalyses propanoyl-CoA + hydrogencarbonate + ATP = (S)-methylmalonyl-CoA + ADP + phosphate + H(+). It functions in the pathway metabolic intermediate metabolism; propanoyl-CoA degradation; succinyl-CoA from propanoyl-CoA: step 1/3. Functionally, this is one of the 2 subunits of the biotin-dependent propionyl-CoA carboxylase (PCC), the enzyme catalyzing the carboxylation of propionyl-CoA/propanoyl-CoA to D-methylmalonyl-CoA/(S)-methylmalonyl-CoA. Within the holoenzyme, the alpha subunit catalyzes the ATP-dependent carboxylation of the biotin carried by the biotin carboxyl carrier (BCC) domain, while the beta subunit then tranfers the carboxyl group from carboxylated biotin to propionyl-CoA. This is Propionyl-CoA carboxylase beta chain from Roseobacter denitrificans (strain ATCC 33942 / OCh 114) (Erythrobacter sp. (strain OCh 114)).